The following is a 1308-amino-acid chain: Spermatogenesis-associated protein 31F1B (1308 aa).

A helical transmembrane segment spans residues 7–27 (FLWDTECPLYVYFCFFIIVLI). Disordered stretches follow at residues 464–488 (SPPI…LDEP), 627–648 (SQPG…AGKG), 844–863 (HGAQ…QPLL), 902–927 (PTAT…LLQG), 1005–1026 (FSTE…VAGK), 1084–1190 (GACP…AGLK), and 1204–1254 (MKSK…PKAQ). Pro residues predominate over residues 465–478 (PPIPLPEAAPPPSS). Over residues 1107–1117 (METDSEQDMED) the composition is skewed to acidic residues.

This sequence belongs to the SPATA31 family.

Its subcellular location is the membrane. The protein is Spermatogenesis-associated protein 31F1B of Mus musculus (Mouse).